We begin with the raw amino-acid sequence, 715 residues long: MLSLLTRPFLPIFCFLYGPQSEGSTRIQCLRRFVTFLLGLVLGFLLWKLAALNFTLGRLFVNGATDLYVFIIFVLVTGTIFMLSLPVRAVILLIFVALVGKSGRTYLRAVAFAFIISGPIANLVENAGEVARVFVCTTVLTYNLSKTRFDLMAKPFTNTLKHMRGDVEEIRHTFYELQEVLVDLKYAVENSDIEDEKYGDKNTKPIYERWGRETSRMNVSEIGNGGKELPTPAAVQERFQRNMRNRCKHQLRSGHRACLEVFRNGYRKCTTNFPSMIAKAICWPYRVDIICELDLFGNPDKICDPSAVVPQNFGETYVELLKAEKKLFDNSSQIVVNYEIKDEQFAKSQLKSAERTGQAFKEDFERQKRIFNKVMGILQKILCLFMLRMVYVSINYYVKYLNDVEFDNFYITKYFKHVDQRRKEQRIDAILPLRTYEKSKYIDVDHIFSRTHHESTTVCFNLLQFLLELVTAGLFILIDHLVVELLQIVRKRSKIVYQQDGEHEVRFNISGVGQMARLLRTTMHNFNIHEKVSTSLSNKECLPNAHVLPKKMYYQLILLYLIIIVLIYQSTTFLRMRRVICSFFYYKREKQRILFLYNRILRNRLRSLEFLIHDAEDNLATHRIQQQVNVFLWLRFSCPVAFGWIRHFKFAKRTCMICRGLEDSTFTVCGNCGLPYCDDCAEDLNSVCFQCGVVLTRGAEGSESSVEVYTYRKEK.

Residues 1–32 are Cytoplasmic-facing; it reads MLSLLTRPFLPIFCFLYGPQSEGSTRIQCLRR. Residues 33–53 traverse the membrane as a helical segment; the sequence is FVTFLLGLVLGFLLWKLAALN. Over 54-66 the chain is Extracellular; sequence FTLGRLFVNGATD. A helical transmembrane segment spans residues 67–87; it reads LYVFIIFVLVTGTIFMLSLPV. The Cytoplasmic portion of the chain corresponds to 88–109; it reads RAVILLIFVALVGKSGRTYLRA. Residues 110–130 traverse the membrane as a helical segment; sequence VAFAFIISGPIANLVENAGEV. Residues 131–373 are Extracellular-facing; it reads ARVFVCTTVL…FERQKRIFNK (243 aa). A helical transmembrane segment spans residues 374 to 394; the sequence is VMGILQKILCLFMLRMVYVSI. The Cytoplasmic segment spans residues 395-457; that stretch reads NYYVKYLNDV…FSRTHHESTT (63 aa). A helical membrane pass occupies residues 458–478; the sequence is VCFNLLQFLLELVTAGLFILI. The Extracellular segment spans residues 479–553; the sequence is DHLVVELLQI…NAHVLPKKMY (75 aa). The chain crosses the membrane as a helical span at residues 554-574; sequence YQLILLYLIIIVLIYQSTTFL. Over 575-715 the chain is Cytoplasmic; sequence RMRRVICSFF…VEVYTYRKEK (141 aa). The RING-type; degenerate zinc finger occupies 655–691; that stretch reads CMICRGLEDSTFTVCGNCGLPYCDDCAEDLNSVCFQC.

As to expression, specifically expressed in testis.

The protein resides in the cytoplasmic vesicle. Its subcellular location is the secretory vesicle. It localises to the acrosome membrane. It is found in the cytoplasm. The protein localises to the cytoplasmic vesicle membrane. In terms of biological role, component of the sperm acrosome membrane. Required for breakdown of the sperm plasma membrane after sperm entry into the egg, which is an essential prerequisite for successful fertilization. In Drosophila melanogaster (Fruit fly), this protein is Protein sneaky.